Reading from the N-terminus, the 668-residue chain is MTSTPFRIHAPFEPTGDQPQAIQKLVAGVQAGHRFQTLLGATGTGKTHTIARVIEALGRPTLVLAHNKTLAAQLCNELRSFFPENAVEYFISYYDYYQPEAYIPVTDTYIEKSASINEEIDMLRHSATRSLFERRDVIVVASISCIYGLGIPAEYLKAAIPLEVGRETELRQLLRQLATIQYTRNDVELGRGRFRVRGDVLEIGPAYEDRIIRVEFFGDEIEAIRYVDPLTGETLQSVERLNIYPAKHFVTPAERLEAACVAIEAELQAQVANLEAQNKLLEAQRLSQRTRYDLEMLRQVGYCNGVENYSRHLAGRAAGEPPECLIDYFPENWLLVVDESHVTVPQIRGMYNGDQARKKVLIDHGFRLPSAADNRPLKPEEFWQKVQQCIFVSATPGDWELAVSTQVVEQIIRPTGVVDPEIFVRPTQGQVDDLYGEIRLRCDRQERVLVTTLTKRMAEDLTEYFQERGVRVRYLHSEINAIERIEILEALRQGDFDVLIGVNLLREGLDLPEVSLVAILDADKEGFLRAERSLIQTIGRAARHVRGQAILYADTLTESMQKAIQETERRRAIQLAYNQAHGIIPQPIVKKTSNAILAFLDVSRRLNAESVPVLSSQTLQDLSLEDIPPLIQDLEAKMKAAAQELAFEEAARYRDQIKRLRDRLVGHP.

In terms of domain architecture, Helicase ATP-binding spans 27 to 413 (AGVQAGHRFQ…STQVVEQIIR (387 aa)). An ATP-binding site is contributed by 40-47 (GATGTGKT). Positions 93–116 (YYDYYQPEAYIPVTDTYIEKSASI) match the Beta-hairpin motif. One can recognise a Helicase C-terminal domain in the interval 430-596 (QVDDLYGEIR…PIVKKTSNAI (167 aa)). The 36-residue stretch at 628–663 (PPLIQDLEAKMKAAAQELAFEEAARYRDQIKRLRDR) folds into the UVR domain.

This sequence belongs to the UvrB family. Forms a heterotetramer with UvrA during the search for lesions. Interacts with UvrC in an incision complex.

Its subcellular location is the cytoplasm. In terms of biological role, the UvrABC repair system catalyzes the recognition and processing of DNA lesions. A damage recognition complex composed of 2 UvrA and 2 UvrB subunits scans DNA for abnormalities. Upon binding of the UvrA(2)B(2) complex to a putative damaged site, the DNA wraps around one UvrB monomer. DNA wrap is dependent on ATP binding by UvrB and probably causes local melting of the DNA helix, facilitating insertion of UvrB beta-hairpin between the DNA strands. Then UvrB probes one DNA strand for the presence of a lesion. If a lesion is found the UvrA subunits dissociate and the UvrB-DNA preincision complex is formed. This complex is subsequently bound by UvrC and the second UvrB is released. If no lesion is found, the DNA wraps around the other UvrB subunit that will check the other stand for damage. In Thermosynechococcus vestitus (strain NIES-2133 / IAM M-273 / BP-1), this protein is UvrABC system protein B.